Consider the following 215-residue polypeptide: Cytochrome b6 (215 aa).

The chain crosses the membrane as a helical span at residues 32–52; the sequence is IFHCLGGITLTCFLVQVATGF. Residue C35 coordinates heme c. H86 and H100 together coordinate heme b. The next 3 helical transmembrane spans lie at 90–110, 116–136, and 186–206; these read ASMMVLMMILHVFRVYLTGGF, LTWVTGVVLAVLTASFGVTGY, and LHTFVLPLLTAVFMLMHFSMI. Heme b contacts are provided by H187 and H202.

It belongs to the cytochrome b family. PetB subfamily. As to quaternary structure, the 4 large subunits of the cytochrome b6-f complex are cytochrome b6, subunit IV (17 kDa polypeptide, PetD), cytochrome f and the Rieske protein, while the 4 small subunits are PetG, PetL, PetM and PetN. The complex functions as a dimer. The cofactor is heme b. Heme c serves as cofactor.

It localises to the plastid. The protein resides in the chloroplast thylakoid membrane. Its function is as follows. Component of the cytochrome b6-f complex, which mediates electron transfer between photosystem II (PSII) and photosystem I (PSI), cyclic electron flow around PSI, and state transitions. The protein is Cytochrome b6 of Nymphaea alba (White water-lily).